A 377-amino-acid chain; its full sequence is Nucleosome assembly protein 1;3 (377 aa).

Residues 26 to 80 (VNVLKNKLQGLTGKHSNVLENLSPNVRKRVEVLREIQTQHDELEAKFFEERAALE) adopt a coiled-coil conformation. The Nuclear export signal signature appears at 47-62 (LSPNVRKRVEVLREIQ). Positions 223–228 (KKKPKK) match the Nuclear localization signal motif. The interval 298 to 377 (EAAQDEDYID…GERPPECKQQ (80 aa)) is disordered. Residues 300-341 (AQDEDYIDLEDDEDEEDDEDEDEDEEDEEEEDEDEDDDDEDE) are compositionally biased toward acidic residues. Residues 345 to 357 (KTKKKSSAGRKRS) are compositionally biased toward basic residues. The residue at position 374 (cysteine 374) is a Cysteine methyl ester. Residue cysteine 374 is the site of S-farnesyl cysteine attachment. Positions 375 to 377 (KQQ) are cleaved as a propeptide — removed in mature form.

It belongs to the nucleosome assembly protein (NAP) family. In terms of assembly, can form homomeric and heteromeric protein complexes with NAP1;4. Binds histones H2A and H2B in vivo. Also able to bind histones H1 and H4 in vitro. Interacts with CYCB1;1 and with alpha tubulin.

It localises to the nucleus. It is found in the cytoplasm. Functionally, may modulate chromatin structure by regulation of nucleosome assembly/disassembly. Could function together with B-type cyclins in the regulation of microtubule dynamics. The polypeptide is Nucleosome assembly protein 1;3 (NAP1;3) (Nicotiana tabacum (Common tobacco)).